The sequence spans 543 residues: Chaperonin GroEL 1 (543 aa).

ATP contacts are provided by residues threonine 29 to proline 32, aspartate 86 to threonine 90, glycine 413, asparagine 479 to alanine 481, and aspartate 495.

Belongs to the chaperonin (HSP60) family. As to quaternary structure, forms a cylinder of 14 subunits composed of two heptameric rings stacked back-to-back. Interacts with the co-chaperonin GroES.

It localises to the cytoplasm. The enzyme catalyses ATP + H2O + a folded polypeptide = ADP + phosphate + an unfolded polypeptide.. Together with its co-chaperonin GroES, plays an essential role in assisting protein folding. The GroEL-GroES system forms a nano-cage that allows encapsulation of the non-native substrate proteins and provides a physical environment optimized to promote and accelerate protein folding. The chain is Chaperonin GroEL 1 from Prochlorococcus marinus (strain NATL2A).